We begin with the raw amino-acid sequence, 375 residues long: tRNA-specific 2-thiouridylase MnmA (375 aa).

ATP-binding positions include glycine 8–serine 15 and methionine 34. The tract at residues asparagine 104–aspartate 106 is interaction with target base in tRNA. Cysteine 109 serves as the catalytic Nucleophile. A disulfide bridge links cysteine 109 with cysteine 208. Glycine 134 contacts ATP. Residues lysine 158–glutamine 160 form an interaction with tRNA region. The Cysteine persulfide intermediate role is filled by cysteine 208. An interaction with tRNA region spans residues arginine 321–tyrosine 322.

It belongs to the MnmA/TRMU family.

It localises to the cytoplasm. It catalyses the reaction S-sulfanyl-L-cysteinyl-[protein] + uridine(34) in tRNA + AH2 + ATP = 2-thiouridine(34) in tRNA + L-cysteinyl-[protein] + A + AMP + diphosphate + H(+). Catalyzes the 2-thiolation of uridine at the wobble position (U34) of tRNA, leading to the formation of s(2)U34. This Mycoplasma mycoides subsp. mycoides SC (strain CCUG 32753 / NCTC 10114 / PG1) protein is tRNA-specific 2-thiouridylase MnmA.